The chain runs to 637 residues: MPEISPAELAKVSSSSSSSSSSSSGRASVKIEEIEGGAAASGVVIVSEELETNPKTVVASIADETVAESSGTGNKSFSRVWTMPLEGSSSSDKAESSSTNQPRLDKSKTERQQKVTHILAEDAAKIFDDKISAGKKLKLLNRIATVKHDGTVEFEVPADAIPQPIVVDRGESKNGVCADESIDGVDLQYIPPMQIVMLIVGTRGDVQPFVAIAKRLQDYGHRVRLATHANFKEFVLTAGLEFYPLGGDPKVLAGYMVKNKGFLPSGPSEIPIQRNQMKDIIYSLLPACKEPDPDSGISFKADAIIANPPAYGHTHVAEALKIPIHVFFTMPWTPTSEFPHPLSRVKQPAGYRLSYQIVDSLIWLGIRDMVNDLRKKKLKLRPVTYLSGTQGSGSNIPHGYMWSPHLVPKPKDWGPQIDVVGFCYLDLASNYEPPAELVEWLEAGDKPIYIGFGSLPVQEPEKMTEIIVEALQRTKQRGIINKGWGGLGNLKEPKDFVYLLDNVPHDWLFPRCKAVVHHGGAGTTAAGLKASCPTTIVPFFGDQPFWGERVHARGVGPSPIPVDEFSLHKLEDAINFMLDDKVKSSAETLAKAMKDEDGVAGAVKAFFKHLPSAKQNISDPIPEPSGFLSFRKCFGCS.

2 disordered regions span residues 1 to 29 (MPEISPAELAKVSSSSSSSSSSSSGRASV) and 66 to 112 (VAES…TERQ). The segment covering 13-24 (SSSSSSSSSSSS) has biased composition (low complexity). Residues 67 to 79 (AESSGTGNKSFSR) are compositionally biased toward polar residues. Over residues 103–112 (RLDKSKTERQ) the composition is skewed to basic and acidic residues.

Belongs to the glycosyltransferase 28 family. Expressed in roots, cauline leaf epidermal cells, stomata, stamen, pollen and around the base of siliques.

It catalyses the reaction a sterol + UDP-alpha-D-glucose = a sterol 3-beta-D-glucoside + UDP + H(+). Involved in the biosynthesis of sterol glucosides. Catalyzes the synthesis of steryl glycosides (SGs) and acyl steryl glycosides (ASGs) which are the most abundant sterol derivatives in higher plants. Can act on several sterols like sitosterol, campesterol and stigmasterol. Both UGT80A2 and UGT80B1 are required for the normal production of SGs and ASGs in seeds. In Arabidopsis thaliana (Mouse-ear cress), this protein is Sterol 3-beta-glucosyltransferase UGT80A2 (UGT80A2).